The sequence spans 475 residues: Dynein regulatory complex subunit 4 (475 aa).

The segment at 1-22 is disordered; the sequence is MPPKRKSSPKGKTPTVVDGLST. The regulates microtubule-binding stretch occupies residues 1 to 113; that stretch reads MPPKRKSSPK…LLYEQQNMLS (113 aa). Coiled coils occupy residues 20-104, 142-200, and 242-426; these read LSTE…VKHL, RSLK…QEEE, and KNLD…VARV. The segment at 114–257 is microtubule-binding; that stretch reads ELKAESIIST…TSLKEELKEM (144 aa).

It belongs to the DRC4 family. In terms of assembly, component of the nexin-dynein regulatory complex (N-DRC). Interacts with microtubules.

It is found in the cytoplasm. It localises to the cytoskeleton. Its subcellular location is the cell projection. The protein resides in the cilium. The protein localises to the flagellum. It is found in the cilium axoneme. It localises to the cilium basal body. Its subcellular location is the golgi apparatus. The protein resides in the flagellum axoneme. Functionally, component of the nexin-dynein regulatory complex (N-DRC), a key regulator of ciliary/flagellar motility which maintains the alignment and integrity of the distal axoneme and regulates microtubule sliding in motile axonemes. Plays an important role in the assembly of the N-DRC linker. Plays dual roles at both the primary (or non-motile) cilia to regulate hedgehog signaling and in motile cilia to coordinate cilia movement. Required for proper slow muscle development and positively regulates ciliary smoothened (SMO)-dependent Hedgehog (Hh) signaling pathway. Required for tether cilia motility which is essential for normal otolith formation and localization in the developing inner ear. The polypeptide is Dynein regulatory complex subunit 4 (gas8) (Danio rerio (Zebrafish)).